The sequence spans 153 residues: Small ribosomal subunit protein uS17 (153 aa).

Belongs to the universal ribosomal protein uS17 family.

This is Small ribosomal subunit protein uS17 (RpS11) from Anopheles gambiae (African malaria mosquito).